The sequence spans 727 residues: Glucans biosynthesis glucosyltransferase H (727 aa).

The segment at 18–43 is disordered; it reads SAMPNERPGAMEPQSLSQMPEGFPRR. 7 helical membrane-spanning segments follow: residues 58 to 78, 94 to 114, 278 to 298, 408 to 428, 460 to 480, 496 to 516, and 572 to 592; these read FFVV…MGAV, LFAI…AGFF, LQQF…GWWV, IMAY…LMLA, LFYI…LLLL, ILSV…MMFI, and LLAW…ISAW.

Belongs to the glycosyltransferase 2 family. OpgH subfamily.

The protein localises to the cell inner membrane. Its pathway is glycan metabolism; osmoregulated periplasmic glucan (OPG) biosynthesis. Its function is as follows. Involved in the biosynthesis of osmoregulated periplasmic glucans (OPGs). This is Glucans biosynthesis glucosyltransferase H from Shewanella sp. (strain ANA-3).